The primary structure comprises 103 residues: Histone H4.2 (103 aa).

A compositionally biased stretch (gly residues) spans 1 to 14 (MSGRGKGGKGLGKG). The interval 1 to 20 (MSGRGKGGKGLGKGGAKRHR) is disordered. Position 6 is an N6-acetyl-N6-methyllysine; alternate (lysine 6). 3 positions are modified to N6-methyllysine; alternate: lysine 6, lysine 9, and lysine 13. Lysine 13 is modified (N6-acetyl-N6-methyllysine; alternate). The DNA-binding element occupies 17–21 (KRHRK). Lysine 92 is modified (N6-glutaryllysine).

The protein belongs to the histone H4 family. As to quaternary structure, the nucleosome is a histone octamer containing two molecules each of H2A, H2B, H3 and H4 assembled in one H3-H4 heterotetramer and two H2A-H2B heterodimers. The octamer wraps approximately 147 bp of DNA. Post-translationally, glutarylation at Lys-92 (H4K91glu) destabilizes nucleosomes by promoting dissociation of the H2A-H2B dimers from nucleosomes.

It is found in the nucleus. Its subcellular location is the chromosome. Its function is as follows. Core component of nucleosome. Nucleosomes wrap and compact DNA into chromatin, limiting DNA accessibility to the cellular machineries which require DNA as a template. Histones thereby play a central role in transcription regulation, DNA repair, DNA replication and chromosomal stability. DNA accessibility is regulated via a complex set of post-translational modifications of histones, also called histone code, and nucleosome remodeling. In Emericella nidulans (strain FGSC A4 / ATCC 38163 / CBS 112.46 / NRRL 194 / M139) (Aspergillus nidulans), this protein is Histone H4.2 (hhfB).